The following is a 413-amino-acid chain: uncharacterized protein (413 aa).

Residues 3-155 (MEPRVLRREE…SRVRLSVPAG (153 aa)) form the N-acetyltransferase domain. Acetyl-CoA contacts are provided by residues 86-88 (VSV), 94-99 (RRGVLT), and 122-123 (SE). Catalysis depends on tyrosine 127, which acts as the Proton donor. The active-site Proton acceptor; via carboxylate is the phenylalanine 413.

This sequence belongs to the acetyltransferase Eis family. In terms of assembly, homohexamer; trimer of dimers.

This is an uncharacterized protein from Streptomyces coelicolor (strain ATCC BAA-471 / A3(2) / M145).